Reading from the N-terminus, the 492-residue chain is Auxin transporter-like protein 1 (492 aa).

Over 1 to 67 (MVPREQAEEA…DAWFSCASNQ (67 aa)) the chain is Cytoplasmic. The helical transmembrane segment at 68-85 (VAQVLLTLPYSFSQLGML) threads the bilayer. The Extracellular portion of the chain corresponds to 86-87 (SG). Residues 88–108 (VLLQLFYGFMGSWTAYLISVL) form a helical membrane-spanning segment. The Cytoplasmic segment spans residues 109–143 (YVEYRSRKEKEGVSFKNHVIQWFEVLDGLLGPYWK). The chain crosses the membrane as a helical span at residues 144–164 (AAGLAFNCTFLLFGSVIQLIA). Over 165–180 (CASNIYYINDRLDKRT) the chain is Extracellular. Residues 181-201 (WTYIFGACCATTVFIPSFHNY) form a helical membrane-spanning segment. Arg-202 is a topological domain (cytoplasmic). Residues 203-223 (IWSFLGLGMTTYTAWYLAIAA) traverse the membrane as a helical segment. Topologically, residues 224 to 240 (LLNGQAEGITHTGPTKL) are extracellular. The helical transmembrane segment at 241-261 (VLYFTGATNILYTFGGHAVTV) threads the bilayer. Topologically, residues 262 to 274 (EIMHAMWKPAKFK) are cytoplasmic. Residues 275-295 (YIYLLATLYVFTLTLPSASAM) traverse the membrane as a helical segment. Topologically, residues 296-322 (YWAFGDELLTHSNAFSLLPKTGWRDAA) are extracellular. Residues 323 to 343 (VILMLIHQFITFGFACTPLYF) form a helical membrane-spanning segment. Over 344 to 364 (VWEKVIGMHDTKSICLRALAR) the chain is Cytoplasmic. A helical transmembrane segment spans residues 365 to 385 (LPIVVPIWFLAIIFPFFGPIN). Position 386 (Ser-386) is a topological domain, extracellular. A helical transmembrane segment spans residues 387-407 (AVGALLVSFTVYIIPALAHIL). The Cytoplasmic segment spans residues 408–432 (TYRTASARMNAAEKPPFFLPSWTGM). Residues 433–453 (FVLNMFIVVWVLVVGFGLGGW) form a helical membrane-spanning segment. The Extracellular segment spans residues 454-492 (ASMVNFIRQIDTFGLFAKCYQCPKPAPALAQSPVPLPHH).

The protein belongs to the amino acid/polyamine transporter 2 family. Amino acid/auxin permease (AAAP) (TC 2.A.18.1) subfamily.

It is found in the cell membrane. In terms of biological role, carrier protein involved in proton-driven auxin influx. May mediate the formation of auxin gradient from developing leaves (site of auxin biosynthesis) to tips. The polypeptide is Auxin transporter-like protein 1 (Oryza sativa subsp. japonica (Rice)).